A 203-amino-acid chain; its full sequence is DNA-directed RNA polymerase III subunit rpc8 (203 aa).

This sequence belongs to the eukaryotic RPB7/RPC8 RNA polymerase subunit family. In terms of assembly, component of the RNA polymerase III (Pol III) complex consisting of 17 subunits. Rpc25/rpc8 and rpc17/rpc9 form a Pol III subcomplex.

The protein localises to the cytoplasm. It localises to the nucleus. In terms of biological role, DNA-dependent RNA polymerase catalyzes the transcription of DNA into RNA using the four ribonucleoside triphosphates as substrates. Specific peripheric component of RNA polymerase III which synthesizes small RNAs, such as 5S rRNA and tRNA. This Schizosaccharomyces pombe (strain 972 / ATCC 24843) (Fission yeast) protein is DNA-directed RNA polymerase III subunit rpc8 (rpc25).